The primary structure comprises 1439 residues: Gag-Pol polyprotein (1439 aa).

Gly-2 carries the N-myristoyl glycine; by host lipid modification. The segment at Ile-7–Leu-31 is interaction with Gp41. The tract at residues Leu-8–Lys-43 is interaction with host CALM1. The segment at Lys-12 to Ile-19 is interaction with host AP3D1. The interaction with membrane phosphatidylinositol 4,5-bisphosphate and RNA stretch occupies residues Asp-14–His-33. The Nuclear export signal motif lies at Trp-16–Arg-22. Residues Lys-26–Lys-32 carry the Nuclear localization signal motif. Positions Glu-73 to Ser-77 are interaction with membrane phosphatidylinositol 4,5-bisphosphate. A disordered region spans residues Glu-105–Gln-128. At Tyr-130 the chain carries Phosphotyrosine; by host. The tract at residues Asn-187–Gln-225 is interaction with human PPIA/CYPA and NUP153. The tract at residues Tyr-275–Leu-361 is dimerization/Multimerization of capsid protein p24. 2 consecutive CCHC-type zinc fingers follow at residues Ile-387 to Ala-404 and Lys-408 to Glu-425. Residues Lys-441 to Glu-485 form a disordered region. Residues Ser-447–Ser-480 show a composition bias toward polar residues. The interval Pro-493–Leu-497 is dimerization of protease. The Peptidase A2 domain occupies Lys-512–Met-581. Asp-517 (for protease activity; shared with dimeric partner) is an active-site residue. 2 dimerization of protease regions span residues Gly-541 to Lys-547 and Asn-580 to Pro-592. The 191-residue stretch at Glu-635 to Leu-825 folds into the Reverse transcriptase domain. 3 residues coordinate Mg(2+): Asp-701, Asp-776, and Asp-777. Residues Phe-818–His-826 are RT 'primer grip'. A Tryptophan repeat motif motif is present at residues Trp-989–Trp-1005. In terms of domain architecture, RNase H type-1 spans Ile-1025–Arg-1148. Mg(2+)-binding residues include Asp-1034, Glu-1069, Asp-1089, and Asp-1140. Residues Asp-1154 to Gln-1195 form an Integrase-type zinc finger. Positions 1163, 1167, 1191, and 1194 each coordinate Zn(2+). In terms of domain architecture, Integrase catalytic spans Val-1205–Ile-1355. Mg(2+) contacts are provided by Asp-1215, Asp-1267, and Glu-1303. Positions Phe-1374–Asp-1421 form a DNA-binding region, integrase-type.

In terms of assembly, homotrimer; further assembles as hexamers of trimers. Interacts with gp41 (via C-terminus). Interacts with host CALM1; this interaction induces a conformational change in the Matrix protein, triggering exposure of the myristate group. Interacts with host AP3D1; this interaction allows the polyprotein trafficking to multivesicular bodies during virus assembly. Part of the pre-integration complex (PIC) which is composed of viral genome, matrix protein, Vpr and integrase. Homodimer; the homodimer further multimerizes as homohexamers or homopentamers. Interacts with human PPIA/CYPA; This interaction stabilizes the capsid. Interacts with human NUP153. Interacts with host PDZD8; this interaction stabilizes the capsid. Interacts with monkey TRIM5; this interaction destabilizes the capsid. As to quaternary structure, homodimer, whose active site consists of two apposed aspartic acid residues. In terms of assembly, heterodimer of p66 RT and p51 RT (RT p66/p51). Heterodimerization of RT is essential for DNA polymerase activity. The overall folding of the subdomains is similar in p66 RT and p51 RT but the spatial arrangements of the subdomains are dramatically different. Homotetramer; may further associate as a homohexadecamer. Part of the pre-integration complex (PIC) which is composed of viral genome, matrix protein, Vpr and integrase. Interacts with human SMARCB1/INI1 and human PSIP1/LEDGF isoform 1. Interacts with human KPNA3; this interaction might play a role in nuclear import of the pre-integration complex. Interacts with human NUP153; this interaction might play a role in nuclear import of the pre-integration complex. Requires Mg(2+) as cofactor. Post-translationally, specific enzymatic cleavages by the viral protease yield mature proteins. The protease is released by autocatalytic cleavage. The polyprotein is cleaved during and after budding, this process is termed maturation. Proteolytic cleavage of p66 RT removes the RNase H domain to yield the p51 RT subunit. Nucleocapsid protein p7 might be further cleaved after virus entry. Tyrosine phosphorylated presumably in the virion by a host kinase. Phosphorylation is apparently not a major regulator of membrane association. In terms of processing, phosphorylated possibly by host MAPK1; this phosphorylation is necessary for Pin1-mediated virion uncoating. Post-translationally, methylated by host PRMT6, impairing its function by reducing RNA annealing and the initiation of reverse transcription.

Its subcellular location is the host cell membrane. It localises to the host endosome. It is found in the host multivesicular body. The protein localises to the virion membrane. The protein resides in the host nucleus. Its subcellular location is the host cytoplasm. It localises to the virion. The catalysed reaction is Specific for a P1 residue that is hydrophobic, and P1' variable, but often Pro.. The enzyme catalyses Endohydrolysis of RNA in RNA/DNA hybrids. Three different cleavage modes: 1. sequence-specific internal cleavage of RNA. Human immunodeficiency virus type 1 and Moloney murine leukemia virus enzymes prefer to cleave the RNA strand one nucleotide away from the RNA-DNA junction. 2. RNA 5'-end directed cleavage 13-19 nucleotides from the RNA end. 3. DNA 3'-end directed cleavage 15-20 nucleotides away from the primer terminus.. It catalyses the reaction 3'-end directed exonucleolytic cleavage of viral RNA-DNA hybrid.. It carries out the reaction DNA(n) + a 2'-deoxyribonucleoside 5'-triphosphate = DNA(n+1) + diphosphate. Protease: The viral protease is inhibited by many synthetic protease inhibitors (PIs), such as amprenavir, atazanavir, indinavir, loprinavir, nelfinavir, ritonavir and saquinavir. Use of protease inhibitors in tritherapy regimens permit more ambitious therapeutic strategies. Reverse transcriptase/ribonuclease H: RT can be inhibited either by nucleoside RT inhibitors (NRTIs) or by non nucleoside RT inhibitors (NNRTIs). NRTIs act as chain terminators, whereas NNRTIs inhibit DNA polymerization by binding a small hydrophobic pocket near the RT active site and inducing an allosteric change in this region. Classical NRTIs are abacavir, adefovir (PMEA), didanosine (ddI), lamivudine (3TC), stavudine (d4T), tenofovir (PMPA), zalcitabine (ddC), and zidovudine (AZT). Classical NNRTIs are atevirdine (BHAP U-87201E), delavirdine, efavirenz (DMP-266), emivirine (I-EBU), and nevirapine (BI-RG-587). The tritherapies used as a basic effective treatment of AIDS associate two NRTIs and one NNRTI. Mediates, with Gag polyprotein, the essential events in virion assembly, including binding the plasma membrane, making the protein-protein interactions necessary to create spherical particles, recruiting the viral Env proteins, and packaging the genomic RNA via direct interactions with the RNA packaging sequence (Psi). Gag-Pol polyprotein may regulate its own translation, by the binding genomic RNA in the 5'-UTR. At low concentration, the polyprotein would promote translation, whereas at high concentration, the polyprotein would encapsidate genomic RNA and then shut off translation. Functionally, targets the polyprotein to the plasma membrane via a multipartite membrane-binding signal, that includes its myristoylated N-terminus. Matrix protein is part of the pre-integration complex. Implicated in the release from host cell mediated by Vpu. Binds to RNA. Its function is as follows. Forms the conical core that encapsulates the genomic RNA-nucleocapsid complex in the virion. Most core are conical, with only 7% tubular. The core is constituted by capsid protein hexamer subunits. The core is disassembled soon after virion entry. Host restriction factors such as TRIM5-alpha or TRIMCyp bind retroviral capsids and cause premature capsid disassembly, leading to blocks in reverse transcription. Capsid restriction by TRIM5 is one of the factors which restricts HIV-1 to the human species. Host PIN1 apparently facilitates the virion uncoating. On the other hand, interactions with PDZD8 or CYPA stabilize the capsid. In terms of biological role, encapsulates and protects viral dimeric unspliced genomic RNA (gRNA). Binds these RNAs through its zinc fingers. Acts as a nucleic acid chaperone which is involved in rearangement of nucleic acid secondary structure during gRNA retrotranscription. Also facilitates template switch leading to recombination. As part of the polyprotein, participates in gRNA dimerization, packaging, tRNA incorporation and virion assembly. Aspartyl protease that mediates proteolytic cleavages of Gag and Gag-Pol polyproteins during or shortly after the release of the virion from the plasma membrane. Cleavages take place as an ordered, step-wise cascade to yield mature proteins. This process is called maturation. Displays maximal activity during the budding process just prior to particle release from the cell. Also cleaves Nef and Vif, probably concomitantly with viral structural proteins on maturation of virus particles. Hydrolyzes host EIF4GI and PABP1 in order to shut off the capped cellular mRNA translation. The resulting inhibition of cellular protein synthesis serves to ensure maximal viral gene expression and to evade host immune response. Also mediates cleavage of host YTHDF3. Mediates cleavage of host CARD8, thereby activating the CARD8 inflammasome, leading to the clearance of latent HIV-1 in patient CD4(+) T-cells after viral reactivation; in contrast, HIV-1 can evade CARD8-sensing when its protease remains inactive in infected cells prior to viral budding. Functionally, multifunctional enzyme that converts the viral RNA genome into dsDNA in the cytoplasm, shortly after virus entry into the cell. This enzyme displays a DNA polymerase activity that can copy either DNA or RNA templates, and a ribonuclease H (RNase H) activity that cleaves the RNA strand of RNA-DNA heteroduplexes in a partially processive 3' to 5' endonucleasic mode. Conversion of viral genomic RNA into dsDNA requires many steps. A tRNA(3)-Lys binds to the primer-binding site (PBS) situated at the 5'-end of the viral RNA. RT uses the 3' end of the tRNA primer to perform a short round of RNA-dependent minus-strand DNA synthesis. The reading proceeds through the U5 region and ends after the repeated (R) region which is present at both ends of viral RNA. The portion of the RNA-DNA heteroduplex is digested by the RNase H, resulting in a ssDNA product attached to the tRNA primer. This ssDNA/tRNA hybridizes with the identical R region situated at the 3' end of viral RNA. This template exchange, known as minus-strand DNA strong stop transfer, can be either intra- or intermolecular. RT uses the 3' end of this newly synthesized short ssDNA to perform the RNA-dependent minus-strand DNA synthesis of the whole template. RNase H digests the RNA template except for two polypurine tracts (PPTs) situated at the 5'-end and near the center of the genome. It is not clear if both polymerase and RNase H activities are simultaneous. RNase H probably can proceed both in a polymerase-dependent (RNA cut into small fragments by the same RT performing DNA synthesis) and a polymerase-independent mode (cleavage of remaining RNA fragments by free RTs). Secondly, RT performs DNA-directed plus-strand DNA synthesis using the PPTs that have not been removed by RNase H as primers. PPTs and tRNA primers are then removed by RNase H. The 3' and 5' ssDNA PBS regions hybridize to form a circular dsDNA intermediate. Strand displacement synthesis by RT to the PBS and PPT ends produces a blunt ended, linear dsDNA copy of the viral genome that includes long terminal repeats (LTRs) at both ends. Its function is as follows. Catalyzes viral DNA integration into the host chromosome, by performing a series of DNA cutting and joining reactions. This enzyme activity takes place after virion entry into a cell and reverse transcription of the RNA genome in dsDNA. The first step in the integration process is 3' processing. This step requires a complex comprising the viral genome, matrix protein, Vpr and integrase. This complex is called the pre-integration complex (PIC). The integrase protein removes 2 nucleotides from each 3' end of the viral DNA, leaving recessed CA OH's at the 3' ends. In the second step, the PIC enters cell nucleus. This process is mediated through integrase and Vpr proteins, and allows the virus to infect a non dividing cell. This ability to enter the nucleus is specific of lentiviruses, other retroviruses cannot and rely on cell division to access cell chromosomes. In the third step, termed strand transfer, the integrase protein joins the previously processed 3' ends to the 5' ends of strands of target cellular DNA at the site of integration. The 5'-ends are produced by integrase-catalyzed staggered cuts, 5 bp apart. A Y-shaped, gapped, recombination intermediate results, with the 5'-ends of the viral DNA strands and the 3' ends of target DNA strands remaining unjoined, flanking a gap of 5 bp. The last step is viral DNA integration into host chromosome. This involves host DNA repair synthesis in which the 5 bp gaps between the unjoined strands are filled in and then ligated. Since this process occurs at both cuts flanking the HIV genome, a 5 bp duplication of host DNA is produced at the ends of HIV-1 integration. Alternatively, Integrase may catalyze the excision of viral DNA just after strand transfer, this is termed disintegration. This is Gag-Pol polyprotein (gag-pol) from Human immunodeficiency virus type 1 group M subtype C (isolate ETH2220) (HIV-1).